A 381-amino-acid chain; its full sequence is Homoserine O-succinyltransferase (381 aa).

An AB hydrolase-1 domain is found at 45-360 (NAVLVCHALN…PHGHDAFLLD (316 aa)). The active-site Nucleophile is Ser151. Arg221 serves as a coordination point for substrate. Active-site residues include Asp321 and His354. Asp355 lines the substrate pocket.

Belongs to the AB hydrolase superfamily. MetX family. In terms of assembly, homodimer.

The protein resides in the cytoplasm. The enzyme catalyses L-homoserine + succinyl-CoA = O-succinyl-L-homoserine + CoA. It participates in amino-acid biosynthesis; L-methionine biosynthesis via de novo pathway; O-succinyl-L-homoserine from L-homoserine: step 1/1. Functionally, transfers a succinyl group from succinyl-CoA to L-homoserine, forming succinyl-L-homoserine. The protein is Homoserine O-succinyltransferase of Burkholderia cenocepacia (strain HI2424).